The sequence spans 110 residues: T cell receptor alpha variable 22 (110 aa).

The signal sequence occupies residues 1-21; that stretch reads MKRILGALLGLLSAQVCCVRG. The Ig-like domain occupies 22-110; sequence IQVEQSPPDL…DSGVYFCAVE (89 aa). Residues Asn38 and Asn44 are each glycosylated (N-linked (GlcNAc...) asparagine). Residues Cys43 and Cys107 are joined by a disulfide bond.

Alpha-beta TR is a heterodimer composed of an alpha and beta chain; disulfide-linked. The alpha-beta TR is associated with the transmembrane signaling CD3 coreceptor proteins to form the TR-CD3 (TcR or TCR). The assembly of alpha-beta TR heterodimers with CD3 occurs in the endoplasmic reticulum where a single alpha-beta TR heterodimer associates with one CD3D-CD3E heterodimer, one CD3G-CD3E heterodimer and one CD247 homodimer forming a stable octameric structure. CD3D-CD3E and CD3G-CD3E heterodimers preferentially associate with TR alpha and TR beta chains, respectively. The association of the CD247 homodimer is the last step of TcR assembly in the endoplasmic reticulum and is required for transport to the cell surface.

Its subcellular location is the cell membrane. V region of the variable domain of T cell receptor (TR) alpha chain that participates in the antigen recognition. Alpha-beta T cell receptors are antigen specific receptors which are essential to the immune response and are present on the cell surface of T lymphocytes. Recognize peptide-major histocompatibility (MH) (pMH) complexes that are displayed by antigen presenting cells (APC), a prerequisite for efficient T cell adaptive immunity against pathogens. Binding of alpha-beta TR to pMH complex initiates TR-CD3 clustering on the cell surface and intracellular activation of LCK that phosphorylates the ITAM motifs of CD3G, CD3D, CD3E and CD247 enabling the recruitment of ZAP70. In turn ZAP70 phosphorylates LAT, which recruits numerous signaling molecules to form the LAT signalosome. The LAT signalosome propagates signal branching to three major signaling pathways, the calcium, the mitogen-activated protein kinase (MAPK) kinase and the nuclear factor NF-kappa-B (NF-kB) pathways, leading to the mobilization of transcription factors that are critical for gene expression and essential for T cell growth and differentiation. The T cell repertoire is generated in the thymus, by V-(D)-J rearrangement. This repertoire is then shaped by intrathymic selection events to generate a peripheral T cell pool of self-MH restricted, non-autoaggressive T cells. Post-thymic interaction of alpha-beta TR with the pMH complexes shapes TR structural and functional avidity. The chain is T cell receptor alpha variable 22 from Homo sapiens (Human).